The chain runs to 699 residues: D-(-)-3-hydroxybutyrate oligomer hydrolase (699 aa).

The first 33 residues, 1–33 (MTAIRGGSRRAPGLALALLGGVLLGACHGDENA), serve as a signal peptide directing secretion. Ser311 acts as the Charge relay system in catalysis.

The protein belongs to the D-(-)-3-hydroxybutyrate oligomer hydrolase family.

It localises to the secreted. The enzyme catalyses (3R)-hydroxybutanoate dimer + H2O = 2 (R)-3-hydroxybutanoate + H(+). Its pathway is lipid metabolism; butanoate metabolism. Functionally, participates in the degradation of poly-3-hydroxybutyrate (PHB). It works downstream of poly(3-hydroxybutyrate) depolymerase, hydrolyzing D(-)-3-hydroxybutyrate oligomers of various length (3HB-oligomers) into 3HB-monomers. The polypeptide is D-(-)-3-hydroxybutyrate oligomer hydrolase (Burkholderia mallei (strain ATCC 23344)).